A 375-amino-acid chain; its full sequence is Histidine biosynthesis bifunctional protein HisB (375 aa).

The segment at Met1 to Pro168 is histidinol-phosphatase. Asp8 (nucleophile) is an active-site residue. Asp8, Asp10, and Asp128 together coordinate Mg(2+). Asp10 functions as the Proton donor in the catalytic mechanism. An imidazoleglycerol-phosphate dehydratase region spans residues Arg169–Leu375.

The protein in the N-terminal section; belongs to the histidinol-phosphatase family. In the C-terminal section; belongs to the imidazoleglycerol-phosphate dehydratase family. The cofactor is Mg(2+).

It is found in the cytoplasm. The enzyme catalyses D-erythro-1-(imidazol-4-yl)glycerol 3-phosphate = 3-(imidazol-4-yl)-2-oxopropyl phosphate + H2O. The catalysed reaction is L-histidinol phosphate + H2O = L-histidinol + phosphate. Its pathway is amino-acid biosynthesis; L-histidine biosynthesis; L-histidine from 5-phospho-alpha-D-ribose 1-diphosphate: step 6/9. It functions in the pathway amino-acid biosynthesis; L-histidine biosynthesis; L-histidine from 5-phospho-alpha-D-ribose 1-diphosphate: step 8/9. The chain is Histidine biosynthesis bifunctional protein HisB from Xanthomonas campestris pv. campestris (strain 8004).